Reading from the N-terminus, the 117-residue chain is Protein P16 (117 aa).

A helical membrane pass occupies residues 7-24 (LYWVGGGLVLILIWLWFR).

It localises to the virion membrane. Protein of the infection vertex complex, which increases the vertex stability. Anchors the vertex structure to the viral membrane. Essential for viral infectivity. The polypeptide is Protein P16 (XVI) (Enterobacteria phage PRD1 (Bacteriophage PRD1)).